The following is a 142-amino-acid chain: Large ribosomal subunit protein uL13 (142 aa).

Belongs to the universal ribosomal protein uL13 family. As to quaternary structure, part of the 50S ribosomal subunit.

In terms of biological role, this protein is one of the early assembly proteins of the 50S ribosomal subunit, although it is not seen to bind rRNA by itself. It is important during the early stages of 50S assembly. This is Large ribosomal subunit protein uL13 from Shewanella amazonensis (strain ATCC BAA-1098 / SB2B).